Here is a 98-residue protein sequence, read N- to C-terminus: NADH-ubiquinone oxidoreductase chain 4L (98 aa).

The next 2 membrane-spanning stretches (helical) occupy residues 26–46 (LVAS…MATL) and 61–81 (IILL…LISI).

This sequence belongs to the complex I subunit 4L family. As to quaternary structure, core subunit of respiratory chain NADH dehydrogenase (Complex I) which is composed of 45 different subunits.

The protein localises to the mitochondrion inner membrane. The enzyme catalyses a ubiquinone + NADH + 5 H(+)(in) = a ubiquinol + NAD(+) + 4 H(+)(out). In terms of biological role, core subunit of the mitochondrial membrane respiratory chain NADH dehydrogenase (Complex I) which catalyzes electron transfer from NADH through the respiratory chain, using ubiquinone as an electron acceptor. Part of the enzyme membrane arm which is embedded in the lipid bilayer and involved in proton translocation. This Macaca nigrescens (Gorontalo macaque) protein is NADH-ubiquinone oxidoreductase chain 4L (MT-ND4L).